We begin with the raw amino-acid sequence, 58 residues long: Small ribosomal subunit protein bS21 (58 aa).

The disordered stretch occupies residues 28–58; it reads VLQDIRKHEHYEKPSIKKKKKSEAARKKKRF. Residues 31-42 show a composition bias toward basic and acidic residues; the sequence is DIRKHEHYEKPS. Residues 43–58 show a composition bias toward basic residues; sequence IKKKKKSEAARKKKRF.

This sequence belongs to the bacterial ribosomal protein bS21 family.

The chain is Small ribosomal subunit protein bS21 from Syntrophomonas wolfei subsp. wolfei (strain DSM 2245B / Goettingen).